A 207-amino-acid chain; its full sequence is Octanoyltransferase (207 aa).

The region spanning 27–202 is the BPL/LPL catalytic domain; the sequence is GETPDELWIV…HLETRLARPQ (176 aa). Residues 66–73, 133–135, and 146–148 each bind substrate; these read RGGQITYH, SLG, and GLS. The active-site Acyl-thioester intermediate is cysteine 164.

Belongs to the LipB family.

The protein resides in the cytoplasm. It carries out the reaction octanoyl-[ACP] + L-lysyl-[protein] = N(6)-octanoyl-L-lysyl-[protein] + holo-[ACP] + H(+). It participates in protein modification; protein lipoylation via endogenous pathway; protein N(6)-(lipoyl)lysine from octanoyl-[acyl-carrier-protein]: step 1/2. Its function is as follows. Catalyzes the transfer of endogenously produced octanoic acid from octanoyl-acyl-carrier-protein onto the lipoyl domains of lipoate-dependent enzymes. Lipoyl-ACP can also act as a substrate although octanoyl-ACP is likely to be the physiological substrate. The chain is Octanoyltransferase from Laribacter hongkongensis (strain HLHK9).